A 51-amino-acid chain; its full sequence is Protein SspM (51 aa).

It belongs to the alpha/beta-type SASP family.

The protein is Protein SspM (sspM) of Mycolicibacterium phlei (Mycobacterium phlei).